The sequence spans 251 residues: Ubiquinone/menaquinone biosynthesis C-methyltransferase UbiE (251 aa).

Residues threonine 74, aspartate 95, and 123–124 each bind S-adenosyl-L-methionine; that span reads NA.

This sequence belongs to the class I-like SAM-binding methyltransferase superfamily. MenG/UbiE family.

It carries out the reaction a 2-demethylmenaquinol + S-adenosyl-L-methionine = a menaquinol + S-adenosyl-L-homocysteine + H(+). The catalysed reaction is a 2-methoxy-6-(all-trans-polyprenyl)benzene-1,4-diol + S-adenosyl-L-methionine = a 5-methoxy-2-methyl-3-(all-trans-polyprenyl)benzene-1,4-diol + S-adenosyl-L-homocysteine + H(+). The protein operates within quinol/quinone metabolism; menaquinone biosynthesis; menaquinol from 1,4-dihydroxy-2-naphthoate: step 2/2. Its pathway is cofactor biosynthesis; ubiquinone biosynthesis. Its function is as follows. Methyltransferase required for the conversion of demethylmenaquinol (DMKH2) to menaquinol (MKH2) and the conversion of 2-polyprenyl-6-methoxy-1,4-benzoquinol (DDMQH2) to 2-polyprenyl-3-methyl-6-methoxy-1,4-benzoquinol (DMQH2). This is Ubiquinone/menaquinone biosynthesis C-methyltransferase UbiE from Shewanella piezotolerans (strain WP3 / JCM 13877).